Reading from the N-terminus, the 293-residue chain is RNA pseudouridylate synthase domain-containing protein 1 (293 aa).

Residue D67 is part of the active site.

This sequence belongs to the pseudouridine synthase RluA family.

This chain is RNA pseudouridylate synthase domain-containing protein 1 (rpusd1), found in Danio rerio (Zebrafish).